The primary structure comprises 478 residues: 2-succinylbenzoate--CoA ligase (478 aa).

It belongs to the ATP-dependent AMP-binding enzyme family. MenE subfamily.

The enzyme catalyses 2-succinylbenzoate + ATP + CoA = 2-succinylbenzoyl-CoA + AMP + diphosphate. Its pathway is quinol/quinone metabolism; 1,4-dihydroxy-2-naphthoate biosynthesis; 1,4-dihydroxy-2-naphthoate from chorismate: step 5/7. The protein operates within quinol/quinone metabolism; menaquinone biosynthesis. In terms of biological role, converts 2-succinylbenzoate (OSB) to 2-succinylbenzoyl-CoA (OSB-CoA). This is 2-succinylbenzoate--CoA ligase from Bacillus licheniformis (strain ATCC 14580 / DSM 13 / JCM 2505 / CCUG 7422 / NBRC 12200 / NCIMB 9375 / NCTC 10341 / NRRL NRS-1264 / Gibson 46).